An 845-amino-acid chain; its full sequence is MIDRKYIRLGEDDEDDGFPVFFPVLSVCEEDEDFKVKEDHMQEEMPILALRNMILFPGVAMPIMVGREKSLKLIRYVEKKGVYFGAVSQRDMDVEEPDRADLYDVGVVAEIIRVLEMPDGTTTAIVQGRQRFALQEITATEPFMKGRVKLLPDILPGKNKDHEFEALVSTIQDMSLKMMELMVERPPRELILSMRRNKNPMYQINFASANISTSIAVKQELLEISKMKDRGYRLLYLLHKELQVMELKASIQMKTREEMDKQQKEYFLQQQIKTIQEELGGNINDIEVQELRTKATTMKWSSEVAETFEKELRKLERLHPQSPDYSVQMQYVQTIISLPWGVFSKDNFNLKRAQSVLDRDHFGLEKVKERIIEHLAVLKMKGDMKSPIICLYGPPGVGKTSLGKSIAESLGRKYVRISLGGLHDEAEIRGHRRTYIGAMCGRIIQSLQRAGTSNPVFVLDEIDKIDSDYKGDPSSALLEVLDPEQNNAFHDNYLDIDFDLSHVLFIATANSLSSISRPLLDRMELIDVSGYIIEEKVEIAARHLIPKQLVEHGFRKNDIKFSKKTIEKLIDDYTRESGVRTLEKQIAAVIRKITKEAAMNVVHTTKVEPSDLVTFLGAPRYTRDRYQGNGDAGVVIGLAWTSVGGEILFIETSLHRGREPKLTLTGNLGDVMKESAVIALDYIRAHSDELGISQEIFNNWQVHVHVPEGAIPKDGPSAGITMVTSLVSALTRRKVRAGIAMTGEITLRGKVLPVGGIKEKILAAKRSGITEIILCEENRKDIEEINDIYLKGLKFHYVSNINEVLKEALLEEKVIDTTDIYSFGKKTEEEKAEKVEKTEKKQRKK.

The region spanning 45 to 242 is the Lon N-terminal domain; the sequence is MPILALRNMI…RLLYLLHKEL (198 aa). 393–400 is a binding site for ATP; it reads GPPGVGKT. One can recognise a Lon proteolytic domain in the interval 629 to 811; that stretch reads NGDAGVVIGL…NEVLKEALLE (183 aa). Catalysis depends on residues Ser717 and Lys760.

It belongs to the peptidase S16 family. As to quaternary structure, homohexamer. Organized in a ring with a central cavity.

Its subcellular location is the cytoplasm. It catalyses the reaction Hydrolysis of proteins in presence of ATP.. ATP-dependent serine protease that mediates the selective degradation of mutant and abnormal proteins as well as certain short-lived regulatory proteins. Required for cellular homeostasis and for survival from DNA damage and developmental changes induced by stress. Degrades polypeptides processively to yield small peptide fragments that are 5 to 10 amino acids long. Binds to DNA in a double-stranded, site-specific manner. This Porphyromonas gingivalis (strain ATCC 33277 / DSM 20709 / CIP 103683 / JCM 12257 / NCTC 11834 / 2561) protein is Lon protease.